We begin with the raw amino-acid sequence, 409 residues long: POU domain, class 4, transcription factor 2 (409 aa).

A disordered region spans residues 26–93; it reads YSALHSTSPG…SEAMRRACLP (68 aa). Residues 31–52 are compositionally biased toward low complexity; that stretch reads STSPGSSAPIAPSASSPSSSSN. Residues 53–69 are compositionally biased toward gly residues; it reads AGGGGGGGGGGGGGGGR. Residues 91-237 are required for transcriptional activation; it reads CLPTPPSNIF…MHQAALSMAH (147 aa). The short motif at 110–119 is the POU-IV box element; that stretch reads RAEALAAVDI. Positions 153–166 are enriched in low complexity; it reads AASSSSVPISHPSA. Positions 153 to 188 are disordered; the sequence is AASSSSVPISHPSALAGTHHHHHHHHHHHHQPHQAL. Over residues 170 to 184 the composition is skewed to basic residues; that stretch reads THHHHHHHHHHHHQP. The Nuclear speckle targeting signal signature appears at 171–185; it reads HHHHHHHHHHHHQPH. The interval 238 to 409 is required for DNA-binding and transcriptional repression; sequence AHGLPSHMGC…QKRMKYSAGI (172 aa). The POU-specific domain maps to 250–327; it reads DVDADPRDLE…ILQAWLEEAE (78 aa). The segment at residues 345–404 is a DNA-binding region (homeobox); it reads KKRKRTSIAAPEKRSLEAYFAIQPRPSSEKIAAIAEKLDLKKNVVRVWFCNQRQKQKRMK.

Belongs to the POU transcription factor family. Class-4 subfamily. As to quaternary structure, interacts with POU4F1; this interaction inhibits both POU4F1 DNA-binding and transcriptional activities. Interacts (C-terminus) with ESR1 (via DNA-binding domain); this interaction increases the estrogen receptor ESR1 transcriptional activity in a DNA- and ligand 17-beta-estradiol-independent manner. Interacts (via C-terminus) with TP53 (via N-terminus). Interacts with DLX1 (via homeobox DNA-binding domain); this interaction suppresses DLX1-mediated transcriptional activity in postnatal retina enhancing retinal ganglion cell (RGC) differentiation. Interacts with DLX2 (via homeobox DNA-binding domain); this interaction enhances RGC differentiation. Interacts (via C-terminus) with ISL1 (via C-terminus). Interacts with ISL2. Interacts with LHX2. Expressed in the brain. Expressed in the ganglion cell layer of the retina.

It localises to the nucleus. It is found in the nucleus speckle. Its subcellular location is the cytoplasm. Tissue-specific DNA-binding transcription factor involved in the development and differentiation of target cells. Functions either as activator or repressor modulating the rate of target gene transcription through RNA polymerase II enzyme in a promoter-dependent manner. Binds to the consensus octamer motif 5'-AT[A/T]A[T/A]T[A/T]A-3' of promoter of target genes. Plays a fundamental role in the gene regulatory network essential for retinal ganglion cell (RGC) differentiation. Binds to an octamer site to form a ternary complex with ISL1; cooperates positively with ISL1 and ISL2 to potentiate transcriptional activation of RGC target genes being involved in RGC fate commitment in the developing retina and RGC axon formation and pathfinding. Inhibits DLX1 and DLX2 transcriptional activities preventing DLX1- and DLX2-mediated ability to promote amacrine cell fate specification. In cooperation with TP53 potentiates transcriptional activation of BAX promoter activity increasing neuronal cell apoptosis. Negatively regulates BAX promoter activity in the absence of TP53. Acts as a transcriptional coactivator via its interaction with the transcription factor ESR1 by enhancing its effect on estrogen response element (ERE)-containing promoter. Antagonizes the transcriptional stimulatory activity of POU4F1 by preventing its binding to an octamer motif. Involved in TNFSF11-mediated terminal osteoclast differentiation. The chain is POU domain, class 4, transcription factor 2 from Homo sapiens (Human).